The sequence spans 413 residues: Elongation factor 1-alpha (413 aa).

In terms of domain architecture, tr-type G spans 5–211 (KEHMNLAFIG…DDLEAPEKPV (207 aa)). The tract at residues 14–21 (GHVDHGKS) is G1. 14–21 (GHVDHGKS) contacts GTP. Ser-21 serves as a coordination point for Mg(2+). The interval 60 to 64 (GVTID) is G2. Positions 81 to 84 (DCPG) are G3. GTP-binding positions include 81–85 (DCPGH) and 136–139 (NKMD). The interval 136-139 (NKMD) is G4. The interval 175 to 177 (SAF) is G5.

The protein belongs to the TRAFAC class translation factor GTPase superfamily. Classic translation factor GTPase family. EF-Tu/EF-1A subfamily.

It is found in the cytoplasm. It carries out the reaction GTP + H2O = GDP + phosphate + H(+). In terms of biological role, GTP hydrolase that promotes the GTP-dependent binding of aminoacyl-tRNA to the A-site of ribosomes during protein biosynthesis. The chain is Elongation factor 1-alpha from Methanothermobacter thermautotrophicus (strain ATCC 29096 / DSM 1053 / JCM 10044 / NBRC 100330 / Delta H) (Methanobacterium thermoautotrophicum).